The sequence spans 142 residues: Hemoglobin subunit alpha (142 aa).

The Globin domain maps to 2–142 (VLSADDKANI…VSTVLTSKYR (141 aa)). Ser-4 carries the post-translational modification Phosphoserine. N6-succinyllysine is present on residues Lys-8 and Lys-12. An N6-acetyllysine; alternate modification is found at Lys-17. At Lys-17 the chain carries N6-succinyllysine; alternate. The residue at position 25 (Tyr-25) is a Phosphotyrosine. Ser-36 bears the Phosphoserine mark. At Lys-41 the chain carries N6-succinyllysine. A Phosphoserine modification is found at Ser-50. His-59 is an O2 binding site. Heme b is bound at residue His-88. Residue Thr-109 is modified to Phosphothreonine. Phosphoserine is present on residues Ser-125 and Ser-132. Phosphothreonine occurs at positions 135 and 138. Ser-139 carries the post-translational modification Phosphoserine.

This sequence belongs to the globin family. As to quaternary structure, heterotetramer of two alpha chains and two beta chains. Red blood cells.

In terms of biological role, involved in oxygen transport from the lung to the various peripheral tissues. Functionally, hemopressin acts as an antagonist peptide of the cannabinoid receptor CNR1. Hemopressin-binding efficiently blocks cannabinoid receptor CNR1 and subsequent signaling. The polypeptide is Hemoglobin subunit alpha (HBA) (Cricetomys gambianus (Northern giant pouched rat)).